The following is a 468-amino-acid chain: ATP synthase subunit beta (468 aa).

Position 155–162 (155–162 (GGAGVGKT)) interacts with ATP.

The protein belongs to the ATPase alpha/beta chains family. F-type ATPases have 2 components, CF(1) - the catalytic core - and CF(0) - the membrane proton channel. CF(1) has five subunits: alpha(3), beta(3), gamma(1), delta(1), epsilon(1). CF(0) has three main subunits: a(1), b(2) and c(9-12). The alpha and beta chains form an alternating ring which encloses part of the gamma chain. CF(1) is attached to CF(0) by a central stalk formed by the gamma and epsilon chains, while a peripheral stalk is formed by the delta and b chains.

It localises to the cell membrane. The enzyme catalyses ATP + H2O + 4 H(+)(in) = ADP + phosphate + 5 H(+)(out). Produces ATP from ADP in the presence of a proton gradient across the membrane. The catalytic sites are hosted primarily by the beta subunits. This chain is ATP synthase subunit beta, found in Streptococcus gordonii (strain Challis / ATCC 35105 / BCRC 15272 / CH1 / DL1 / V288).